Here is a 236-residue protein sequence, read N- to C-terminus: uncharacterized protein (236 aa).

One can recognise a DPCK domain in the interval 3–208; sequence ILGLTGSIAT…PSYFFTLLCL (206 aa). Position 8-15 (8-15) interacts with ATP; it reads GSIATGKS. Residues Ser82 and Ser86 each carry the phosphoserine modification.

It belongs to the CoaE family.

It localises to the cytoplasm. This is an uncharacterized protein from Schizosaccharomyces pombe (strain 972 / ATCC 24843) (Fission yeast).